The following is a 144-amino-acid chain: Large ribosomal subunit protein uL16 (144 aa).

The protein belongs to the universal ribosomal protein uL16 family. As to quaternary structure, part of the 50S ribosomal subunit.

Functionally, binds 23S rRNA and is also seen to make contacts with the A and possibly P site tRNAs. The chain is Large ribosomal subunit protein uL16 from Lactiplantibacillus plantarum (strain ATCC BAA-793 / NCIMB 8826 / WCFS1) (Lactobacillus plantarum).